The sequence spans 357 residues: Queuosine-tRNA galactosyltransferase (357 aa).

It belongs to the glycosyltransferase 2 family.

It is found in the cytoplasm. The enzyme catalyses queuosine(34) in tRNA(Tyr) + UDP-alpha-D-galactose = O-5''-beta-D-galactosylqueuosine(34) in tRNA(Tyr) + UDP + H(+). In terms of biological role, glycosyltransferase that specifically catalyzes galactosylation of cytoplasmic tRNA(Tyr) modified with queuosine at position 34 (queuosine(34)). Galactosylates the cyclopentene hydroxyl group of queuosine(34) in tRNA(Tyr) to form galactosyl-queuosine(34). Mannosylation of queuosine(34) in tRNA(Tyr) is required to slow-down elongation at cognate codons UAC and suppress stop codon readthrough, thereby regulating protein translation. In Rattus norvegicus (Rat), this protein is Queuosine-tRNA galactosyltransferase.